A 182-amino-acid polypeptide reads, in one-letter code: Adenine phosphoribosyltransferase (182 aa).

This sequence belongs to the purine/pyrimidine phosphoribosyltransferase family. As to quaternary structure, homodimer.

The protein localises to the cytoplasm. It carries out the reaction AMP + diphosphate = 5-phospho-alpha-D-ribose 1-diphosphate + adenine. It participates in purine metabolism; AMP biosynthesis via salvage pathway; AMP from adenine: step 1/1. Functionally, catalyzes a salvage reaction resulting in the formation of AMP, that is energically less costly than de novo synthesis. The protein is Adenine phosphoribosyltransferase of Pseudomonas fluorescens (strain Pf0-1).